The chain runs to 541 residues: Nectin 1b (541 aa).

A signal peptide spans 1 to 21 (MDKQESFFVGHKSHRCSQNRS). Over 22-396 (VSQIHQRTSR…PAELHSSGAA (375 aa)) the chain is Extracellular. Residues N51, N105, N180, N242, N326, N337, and N372 are each glycosylated (N-linked (GlcNAc...) asparagine). The region spanning 77 to 182 (GDTVELKCLF…GNRENMVNLT (106 aa)) is the Ig-like V-type domain. The cysteines at positions 84 and 165 are disulfide-linked. Ig-like C2-type domains are found at residues 187–282 (PVTK…VILN) and 287–374 (PEVK…VNVT). 2 cysteine pairs are disulfide-bonded: C212/C266 and C309/C356. The helical transmembrane segment at 397-417 (IGGAVGGVALLVAAIALLVFF) threads the bilayer. At 418–541 (LRRRQRTFKG…SVISKKEWYV (124 aa)) the chain is on the cytoplasmic side. A disordered region spans residues 440 to 507 (YSKAGGMPAH…VDEGESRDYD (68 aa)). The segment covering 479-493 (SGDRDFDGNSEDLKR) has biased composition (basic and acidic residues).

The protein belongs to the nectin family. Cis- and trans-homodimer. Can form trans-heterodimers. Expressed in the developing eye and nervous system.

The protein localises to the cell membrane. It is found in the cell junction. The protein resides in the adherens junction. Its function is as follows. Cell adhesion molecule that promotes cell-cell contacts and plays important roles in the development of the nervous system. Acts by forming homophilic or heterophilic trans-dimers. The polypeptide is Nectin 1b (Danio rerio (Zebrafish)).